A 275-amino-acid polypeptide reads, in one-letter code: NH(3)-dependent NAD(+) synthetase (275 aa).

46–53 (GISGGQDS) contributes to the ATP binding site. Asp52 contributes to the Mg(2+) binding site. Residue Arg140 participates in deamido-NAD(+) binding. Residue Thr160 participates in ATP binding. Glu165 contacts Mg(2+). The deamido-NAD(+) site is built by Lys173 and Asp180. ATP is bound by residues Lys189 and Thr211. 260-261 (HK) contacts deamido-NAD(+).

This sequence belongs to the NAD synthetase family. As to quaternary structure, homodimer.

The enzyme catalyses deamido-NAD(+) + NH4(+) + ATP = AMP + diphosphate + NAD(+) + H(+). It participates in cofactor biosynthesis; NAD(+) biosynthesis; NAD(+) from deamido-NAD(+) (ammonia route): step 1/1. Catalyzes the ATP-dependent amidation of deamido-NAD to form NAD. Uses ammonia as a nitrogen source. The protein is NH(3)-dependent NAD(+) synthetase of Cronobacter sakazakii (strain ATCC BAA-894) (Enterobacter sakazakii).